The primary structure comprises 142 residues: Large ribosomal subunit protein uL13 (142 aa).

Belongs to the universal ribosomal protein uL13 family. Part of the 50S ribosomal subunit.

In terms of biological role, this protein is one of the early assembly proteins of the 50S ribosomal subunit, although it is not seen to bind rRNA by itself. It is important during the early stages of 50S assembly. The protein is Large ribosomal subunit protein uL13 of Nitrosococcus oceani (strain ATCC 19707 / BCRC 17464 / JCM 30415 / NCIMB 11848 / C-107).